The following is a 212-amino-acid chain: Entry-fusion complex associated protein OPG083 (212 aa).

Residues 1-175 (MAETKEFKTL…IIENRLPYYD (175 aa)) are Virion surface-facing. Disulfide bonds link Cys-33/Cys-55, Cys-47/Cys-127, and Cys-107/Cys-149. Residues 176-196 (PWFLVGVAIILVIFTVAICSI) form a helical membrane-spanning segment. Residues 197–212 (RRNLALKYRYGTFLYV) are Intravirion-facing.

Belongs to the orthopoxvirus OPG053 family. As to quaternary structure, component of the entry fusion complex (EFC) composed of OPG053/F9, OPG076/O3, OPG086/G3, OPG094/G9, OPG095/L1, OPG099/L5, OPG107/H2, OPG143/A16, OPG104/J5, OPG147/A21 and OPG155/A28. Except for OPG095/L1 and OPG052/F9, each of the EFC proteins is required for assembly or stability of the complex. Post-translationally, disulfid bonds are oxidized in the cytoplasm by OPG088 protein. Unglycosylated because produced in viral factories instead of the classic ER -Golgi route.

Its subcellular location is the virion membrane. Component of the entry fusion complex (EFC), which consists of 11 proteins. During cell infection, this complex mediates entry of the virion core into the host cytoplasm by a two-step mechanism consisting of lipid mixing of the viral and cellular membranes and subsequent pore formation. This is Entry-fusion complex associated protein OPG083 (OPG053) from Vaccinia virus (strain Western Reserve) (VACV).